The primary structure comprises 540 residues: MFSPLGQFKHIVCPFLRTGRKCQSRNCFFSHDFQNSTKISPPYSENVEGYPKVKIEKSLPYKYDNCKLSICVPIVTTCIPYHSVENLNFNIRQNISTTLNLEKTNDSIKETKNENFRMDVLETYKCKQLNHQTTHLPTNTVLKKRSLFNDAISIVPNKKKQLVSAISTNSDSQGASSNIIPTPKYDSNSPAGHELRKRMTHLLYESYKDLGYSNAESSMLALLDEKNICETANSKMIYSSSCKSKILSLKKAPKKNEIQGSTPDEKLESLVHSEEELILWGYNIGDVAPVNPPDELRECDRCGTRFADPRGPCTYHWGKLFREKQGGEKIRTYTCCGVKEGDSSGCIIEDNHVFKYRHLPYLASVHPFSYLPDSTNSKQLSHCALDCELCYTTNGMELARLTVVAKESIIMDVFIKPKGKILSLNTRFSGIHDAKELESGITMDQMYIKIKELGMNKNTILIGHGLENDLNAMRLIHKRVIDTALLFTHARGPPFRYSLKYLTKKYLGTTIQTSTHDSEEDAVSALQLVFYKTKSNESQN.

A C3H1-type zinc finger spans residues 7–34 (QFKHIVCPFLRTGRKCQSRNCFFSHDFQ). Positions 382-529 (HCALDCELCY…EDAVSALQLV (148 aa)) constitute an Exonuclease domain.

Belongs to the REXO1/REXO3 family.

The protein resides in the cytoplasm. It localises to the nucleus. 3' to 5' exoribonuclease required for proper 3' end maturation of MRP RNA and of the U5L snRNA. The protein is RNA exonuclease 3 (rex3) of Schizosaccharomyces pombe (strain 972 / ATCC 24843) (Fission yeast).